We begin with the raw amino-acid sequence, 321 residues long: Flagellin C (321 aa).

Belongs to the bacterial flagellin family.

The protein localises to the secreted. Its subcellular location is the bacterial flagellum. Flagellin is the subunit protein which polymerizes to form the filaments of bacterial flagella. The protein is Flagellin C (flaC) of Rhizobium meliloti (strain 1021) (Ensifer meliloti).